The following is a 358-amino-acid chain: Peptide chain release factor 1 (358 aa).

Gln235 bears the N5-methylglutamine mark.

Belongs to the prokaryotic/mitochondrial release factor family. Methylated by PrmC. Methylation increases the termination efficiency of RF1.

Its subcellular location is the cytoplasm. Its function is as follows. Peptide chain release factor 1 directs the termination of translation in response to the peptide chain termination codons UAG and UAA. The chain is Peptide chain release factor 1 from Neisseria meningitidis serogroup B (strain ATCC BAA-335 / MC58).